Here is a 501-residue protein sequence, read N- to C-terminus: Cytochrome P450 2J4 (501 aa).

2 helical membrane-spanning segments follow: residues I12 to A32 and N77 to I97. Residue C447 participates in heme binding.

It belongs to the cytochrome P450 family. It depends on heme as a cofactor. In terms of tissue distribution, expressed in small intestinal enterocytes (at protein level). In the intestinal crypt, expressed at higher levels in the mature villous cells than in undifferentiated crypt cells (at protein level). Expressed in liver, kidney, lung, and olfactory mucosa (at protein level).

Its subcellular location is the endoplasmic reticulum membrane. The protein localises to the microsome membrane. It carries out the reaction an organic molecule + reduced [NADPH--hemoprotein reductase] + O2 = an alcohol + oxidized [NADPH--hemoprotein reductase] + H2O + H(+). The enzyme catalyses (5Z,8Z,11Z,14Z)-eicosatetraenoate + reduced [NADPH--hemoprotein reductase] + O2 = 19-hydroxy-(5Z,8Z,11Z,14Z)-eicosatetraenoate + oxidized [NADPH--hemoprotein reductase] + H2O + H(+). The catalysed reaction is all-trans-retinal + reduced [NADPH--hemoprotein reductase] + O2 = all-trans-retinoate + oxidized [NADPH--hemoprotein reductase] + H2O + 2 H(+). It catalyses the reaction 9-cis-retinal + reduced [NADPH--hemoprotein reductase] + O2 = 9-cis-retinoate + oxidized [NADPH--hemoprotein reductase] + H2O + 2 H(+). It participates in lipid metabolism; arachidonate metabolism. It functions in the pathway cofactor metabolism; retinol metabolism. In terms of biological role, a cytochrome P450 monooxygenase that may play a major role in intestinal retinoid metabolism. Catalyzes the oxidative transformation of all-trans retinal and 9-cis-retinal to the corresponding active forms all-trans and 9-cis retinoic acids. Catalyzes the hydroxylation of carbon-hydrogen bonds. Hydroxylates arachidonic acid predominantly at the omega-1 position. Mechanistically, uses molecular oxygen inserting one oxygen atom into a substrate, and reducing the second into a water molecule, with two electrons provided by NADPH via cytochrome P450 reductase (CPR; NADPH--hemoprotein reductase). This Rattus norvegicus (Rat) protein is Cytochrome P450 2J4.